We begin with the raw amino-acid sequence, 361 residues long: S-adenosylmethionine decarboxylase proenzyme (361 aa).

Residues E8 and E11 contribute to the active site. S68 serves as the catalytic Schiff-base intermediate with substrate; via pyruvic acid. S68 carries the post-translational modification Pyruvic acid (Ser); by autocatalysis. C82 acts as the Proton donor; for catalytic activity in catalysis. Residues S234 and H247 each act as proton acceptor; for processing activity in the active site. Residues S341–E361 form a disordered region.

Belongs to the eukaryotic AdoMetDC family. The cofactor is pyruvate. Post-translationally, is synthesized initially as an inactive proenzyme. Formation of the active enzyme involves a self-maturation process in which the active site pyruvoyl group is generated from an internal serine residue via an autocatalytic post-translational modification. Two non-identical subunits are generated from the proenzyme in this reaction, and the pyruvate is formed at the N-terminus of the alpha chain, which is derived from the carboxyl end of the proenzyme. The post-translation cleavage follows an unusual pathway, termed non-hydrolytic serinolysis, in which the side chain hydroxyl group of the serine supplies its oxygen atom to form the C-terminus of the beta chain, while the remainder of the serine residue undergoes an oxidative deamination to produce ammonia and the pyruvoyl group blocking the N-terminus of the alpha chain.

It catalyses the reaction S-adenosyl-L-methionine + H(+) = S-adenosyl 3-(methylsulfanyl)propylamine + CO2. It participates in amine and polyamine biosynthesis; S-adenosylmethioninamine biosynthesis; S-adenosylmethioninamine from S-adenosyl-L-methionine: step 1/1. The polypeptide is S-adenosylmethionine decarboxylase proenzyme (SAMDC) (Helianthus annuus (Common sunflower)).